A 344-amino-acid chain; its full sequence is MSNAITMGIFWHLIGAASAACFYAPFKKVKKWSWETMWSVGGIVSWIILPWAISALLLPNFWAYYSSFSLSTLLPVFLFGAMWGIGNINYGLTMRYLGMSMGIGIAIGITLIVGTLMTPIINGNFDVLINTEGGRMTLLGVLVALIGVGIVTRAGQLKERKMGIKAEEFNLKKGLVLAVMCGIFSAGMSFAMNAAKPMHEAAAALGVDPLYVALPSYVVIMGGGAIINLGFCFIRLAKVKDLSLKADFSLAKPLIIHNVLLSALGGLMWYLQFFFYAWGHARIPAQYDYISWMLHMSFYVLCGGIVGLVLKEWNNAGRRPVTVLSLGCVVIIVAANIVGMGMAN.

10 helical membrane-spanning segments follow: residues 4-24 (AITM…CFYA), 38-58 (WSVG…ALLL), 68-88 (FSLS…IGNI), 101-121 (MGIG…TPII), 137-157 (TLLG…AGQL), 175-195 (LVLA…MNAA), 214-234 (LPSY…FCFI), 259-279 (VLLS…YAWG), 290-310 (ISWM…GLVL), and 323-343 (VLSL…MGMA).

Belongs to the L-rhamnose transporter (TC 2.A.7.6) family.

It localises to the cell inner membrane. The catalysed reaction is L-rhamnopyranose(in) + H(+)(in) = L-rhamnopyranose(out) + H(+)(out). Its function is as follows. Uptake of L-rhamnose across the cytoplasmic membrane with the concomitant transport of protons into the cell (symport system). The protein is L-rhamnose-proton symporter of Escherichia coli O157:H7.